Consider the following 174-residue polypeptide: Serine protease 2 (174 aa).

C15 and C36 are oxidised to a cystine. Active-site charge relay system residues include H35, D65, and S147. A disulfide bond links C141 and C168.

Belongs to the peptidase S1 family.

Its subcellular location is the secreted. Its function is as follows. Broad substrate specificity. The sequence is that of Serine protease 2 from Streptomyces fradiae (Streptomyces roseoflavus).